The following is a 289-amino-acid chain: Toxin tox21A (289 aa).

The N-terminal stretch at 1-14 is a signal peptide; the sequence is MNLYFLFFISTILA. The propeptide occupies 15–27; the sequence is AKPFNSFNKTSLI. The segment at 270–289 is disordered; sequence DKDITVHENAGDPKSDSRRC.

Post-translationally, contains several disulfide bonds. In terms of tissue distribution, posterior glands which appear to be connected with the stylet through a series of ducts.

Its subcellular location is the secreted. Functionally, has contracting-paralyzing activity in insect larvae. The polypeptide is Toxin tox21A (Pyemotes tritici (Straw itch mite)).